The chain runs to 79 residues: MSAAEIKDKVYDIIVSKMGVNKDQITPESKFADDLGADSLDTVELIMELENEFGVQIPDEDAEKIGTVQQAIDYIVNKK.

The 76-residue stretch at 4-79 (AEIKDKVYDI…QAIDYIVNKK (76 aa)) folds into the Carrier domain. O-(pantetheine 4'-phosphoryl)serine is present on S39.

Belongs to the acyl carrier protein (ACP) family. 4'-phosphopantetheine is transferred from CoA to a specific serine of apo-ACP by AcpS. This modification is essential for activity because fatty acids are bound in thioester linkage to the sulfhydryl of the prosthetic group.

It localises to the cytoplasm. Its pathway is lipid metabolism; fatty acid biosynthesis. In terms of biological role, carrier of the growing fatty acid chain in fatty acid biosynthesis. This chain is Acyl carrier protein, found in Chlorobaculum parvum (strain DSM 263 / NCIMB 8327) (Chlorobium vibrioforme subsp. thiosulfatophilum).